A 413-amino-acid chain; its full sequence is Sporulation-specific protein 74 (413 aa).

Residues 1–87 (MGAGTLLNGL…SEHTDDFNDG (87 aa)) form a disordered region. Positions 69-83 (HENKDIHERSEHTDD) are enriched in basic and acidic residues.

As to quaternary structure, interacts with itself. Interacts with MPC54, NUD1 and SPO21/MPC70.

It is found in the cytoplasm. The protein resides in the cytoskeleton. It localises to the microtubule organizing center. The protein localises to the spindle pole body. Functionally, involved in the pathway that organizes the shaping and sizing of the prospore membrane (PSM) during sporulation. Probable component of a core structural unit of the scaffold that initiates synthesis of the prospore membrane. In Saccharomyces cerevisiae (strain ATCC 204508 / S288c) (Baker's yeast), this protein is Sporulation-specific protein 74 (SPO74).